A 124-amino-acid chain; its full sequence is MATINQLVRKPRKRKVAKSDVPALQACPQRRGVCTRVYTTTPKKPNSALRKVCRVRLTNGYEVSSYIGGEGHNLQEHSVVLIRGGRVKDLPGVRYHTVRGTLDTQGVQNRKQGRSKYGAKRPKS.

The segment at 1–22 (MATINQLVRKPRKRKVAKSDVP) is disordered. A 3-methylthioaspartic acid modification is found at D89. The interval 101–124 (TLDTQGVQNRKQGRSKYGAKRPKS) is disordered. Positions 111–124 (KQGRSKYGAKRPKS) are enriched in basic residues.

It belongs to the universal ribosomal protein uS12 family. In terms of assembly, part of the 30S ribosomal subunit. Contacts proteins S8 and S17. May interact with IF1 in the 30S initiation complex.

With S4 and S5 plays an important role in translational accuracy. Its function is as follows. Interacts with and stabilizes bases of the 16S rRNA that are involved in tRNA selection in the A site and with the mRNA backbone. Located at the interface of the 30S and 50S subunits, it traverses the body of the 30S subunit contacting proteins on the other side and probably holding the rRNA structure together. The combined cluster of proteins S8, S12 and S17 appears to hold together the shoulder and platform of the 30S subunit. The protein is Small ribosomal subunit protein uS12 of Marinobacter nauticus (strain ATCC 700491 / DSM 11845 / VT8) (Marinobacter aquaeolei).